Reading from the N-terminus, the 556-residue chain is Polypeptide N-acetylgalactosaminyltransferase 13 (556 aa).

Residues Met-1–Phe-4 lie on the Cytoplasmic side of the membrane. A helical; Signal-anchor for type II membrane protein membrane pass occupies residues Val-5 to Tyr-27. Topologically, residues Phe-28–Thr-556 are lumenal. Asn-94 and Asn-116 each carry an N-linked (GlcNAc...) asparagine glycan. Disulfide bonds link Cys-105–Cys-338, Cys-329–Cys-407, Cys-441–Cys-458, Cys-481–Cys-496, and Cys-522–Cys-539. Positions Leu-114–Arg-224 are catalytic subdomain A. Positions 155 and 185 each coordinate substrate. Residues Asp-208 and His-210 each coordinate Mn(2+). Positions Pro-284 to Arg-346 are catalytic subdomain B. A substrate-binding site is contributed by Trp-315. His-343 contributes to the Mn(2+) binding site. Residues Arg-346 and Tyr-351 each coordinate substrate. Residues Tyr-428–Arg-550 form the Ricin B-type lectin domain. Residue Asn-551 is glycosylated (N-linked (GlcNAc...) asparagine).

It belongs to the glycosyltransferase 2 family. GalNAc-T subfamily. Requires Mn(2+) as cofactor. In terms of tissue distribution, specifically expressed in neuronal cells. Expressed in fetal brain, whole adult brain, cerebral cortex and cerebellum. Not expressed in other tissues tested.

It is found in the golgi apparatus membrane. It carries out the reaction L-seryl-[protein] + UDP-N-acetyl-alpha-D-galactosamine = a 3-O-[N-acetyl-alpha-D-galactosaminyl]-L-seryl-[protein] + UDP + H(+). The enzyme catalyses L-threonyl-[protein] + UDP-N-acetyl-alpha-D-galactosamine = a 3-O-[N-acetyl-alpha-D-galactosaminyl]-L-threonyl-[protein] + UDP + H(+). The protein operates within protein modification; protein glycosylation. Catalyzes the initial reaction in O-linked oligosaccharide biosynthesis, the transfer of an N-acetyl-D-galactosamine (GalNAc) residue from UDP-GalNAc to a serine or threonine residue on the protein receptor. Generates GalNAc-O-Ser/Thr structure also known as Tn antigen, which itself is immunogenic but also serves as a precursor for the synthesis of different mucin-type O-glycan core structures. Contributes to the synthesis of O-linked glycans on mucins and proteoglycans of the central nervous system. May promote neurogenesis through glycosylation and stabilization of PDPN. In terms of biological role, can glycosylate both unmodified peptides and glycopeptides that already contain an O-linked GalNAc sugar. Transfers GalNAc to Thr-/Ser-rich tandem repeats GTTPSPVPTTSTTSAP of MUC5AC, specifically on Thr-3 of non-glycosylated MUC5AC peptide, on Thr-12 and Thr-13 of preglycosylated MUC5AC at Thr-3 (MUC5AC-3), on Thr-3 of preglycosylated MUC5AC at Thr-13 (MUC5AC-13) and on Thr-12 of preglycosylated MUC5AC at Thr-3 and Thr-13 (MUC5AC-3,13). Transfers GalNAc to three consecutive serine/threonine residues on SDC3 forming a triplet-Tn epitope expressed in Purkinje cells of the developing brain. Its function is as follows. Can glycosylate both unmodified peptides and glycopeptides that already contain an O-linked GalNAc sugar. Transfers GalNAc to Thr-/Ser-rich tandem repeats GTTPSPVPTTSTTSAP of MUC5AC, specifically on Thr-3 of non-glycosylated MUC5AC peptide, on Thr-12 and Thr-13 of preglycosylated MUC5AC at Thr-3 (MUC5AC-3), on Thr-3 of preglycosylated MUC5AC at Thr-13 (MUC5AC-13) and on Thr-12 of preglycosylated MUC5AC at Thr-3 and Thr-13 (MUC5AC-3,13). This chain is Polypeptide N-acetylgalactosaminyltransferase 13 (GALNT13), found in Homo sapiens (Human).